The chain runs to 289 residues: S-methyl-5'-thioadenosine phosphorylase (289 aa).

Phosphate is bound by residues Ser-24, 66–67, and 99–100; these read RH and TA. Residue Met-202 coordinates substrate. Thr-203 contacts phosphate. Residue 226–228 participates in substrate binding; it reads DYD.

This sequence belongs to the PNP/MTAP phosphorylase family. MTAP subfamily. As to quaternary structure, homotrimer.

It localises to the cytoplasm. The protein resides in the nucleus. It catalyses the reaction S-methyl-5'-thioadenosine + phosphate = 5-(methylsulfanyl)-alpha-D-ribose 1-phosphate + adenine. It participates in amino-acid biosynthesis; L-methionine biosynthesis via salvage pathway; S-methyl-5-thio-alpha-D-ribose 1-phosphate from S-methyl-5'-thioadenosine (phosphorylase route): step 1/1. Catalyzes the reversible phosphorylation of S-methyl-5'-thioadenosine (MTA) to adenine and 5-methylthioribose-1-phosphate. Involved in the breakdown of MTA, a major by-product of polyamine biosynthesis. Responsible for the first step in the methionine salvage pathway after MTA has been generated from S-adenosylmethionine. Has broad substrate specificity with 6-aminopurine nucleosides as preferred substrates. The chain is S-methyl-5'-thioadenosine phosphorylase from Drosophila pseudoobscura pseudoobscura (Fruit fly).